Here is a 449-residue protein sequence, read N- to C-terminus: Tubulin alpha chain (449 aa).

Position 11 (Gln-11) interacts with GTP. The residue at position 40 (Lys-40) is an N6-acetyllysine. GTP is bound by residues Glu-71, Ser-140, Gly-144, Thr-145, Thr-179, Asn-206, and Asn-228. Residue Glu-71 participates in Mg(2+) binding. Residue Glu-254 is part of the active site.

The protein belongs to the tubulin family. Dimer of alpha and beta chains. A typical microtubule is a hollow water-filled tube with an outer diameter of 25 nm and an inner diameter of 15 nM. Alpha-beta heterodimers associate head-to-tail to form protofilaments running lengthwise along the microtubule wall with the beta-tubulin subunit facing the microtubule plus end conferring a structural polarity. Microtubules usually have 13 protofilaments but different protofilament numbers can be found in some organisms and specialized cells. It depends on Mg(2+) as a cofactor. Undergoes a tyrosination/detyrosination cycle, the cyclic removal and re-addition of a C-terminal tyrosine residue by the enzymes tubulin tyrosine carboxypeptidase (TTCP) and tubulin tyrosine ligase (TTL), respectively. In terms of processing, some glutamate residues at the C-terminus are either polyglutamylated or polyglycylated. These 2 modifications occur exclusively on glutamate residues and result in either polyglutamate or polyglycine chains on the gamma-carboxyl group. Both modifications can coexist on the same protein on adjacent residues, and lowering polyglycylation levels increases polyglutamylation, and reciprocally. The precise function of such modifications is still unclear but they regulate the assembly and dynamics of axonemal microtubules. Post-translationally, acetylation of alpha chains at Lys-40 stabilizes microtubules and affects affinity and processivity of microtubule motors. This modification has a role in multiple cellular functions, ranging from cell motility, cell cycle progression or cell differentiation to intracellular trafficking and signaling.

Its subcellular location is the cytoplasm. It is found in the cytoskeleton. It catalyses the reaction GTP + H2O = GDP + phosphate + H(+). Tubulin is the major constituent of microtubules, a cylinder consisting of laterally associated linear protofilaments composed of alpha- and beta-tubulin heterodimers. Microtubules grow by the addition of GTP-tubulin dimers to the microtubule end, where a stabilizing cap forms. Below the cap, tubulin dimers are in GDP-bound state, owing to GTPase activity of alpha-tubulin. This Tetrahymena thermophila protein is Tubulin alpha chain.